The following is a 181-amino-acid chain: Endoribonuclease YbeY (181 aa).

Zn(2+) is bound by residues histidine 120, histidine 124, and histidine 130. Residues alanine 157 to arginine 181 form a disordered region. Gly residues predominate over residues arginine 161–glutamate 174.

This sequence belongs to the endoribonuclease YbeY family. It depends on Zn(2+) as a cofactor.

The protein resides in the cytoplasm. Its function is as follows. Single strand-specific metallo-endoribonuclease involved in late-stage 70S ribosome quality control and in maturation of the 3' terminus of the 16S rRNA. The polypeptide is Endoribonuclease YbeY (Frankia alni (strain DSM 45986 / CECT 9034 / ACN14a)).